A 347-amino-acid polypeptide reads, in one-letter code: tRNA N6-adenosine threonylcarbamoyltransferase (347 aa).

Fe cation contacts are provided by His113 and His117. Residues Ile136–Gly140, Asp170, Gly183, Asp187, and Asn282 each bind substrate. Position 310 (Asp310) interacts with Fe cation.

Belongs to the KAE1 / TsaD family. It depends on Fe(2+) as a cofactor.

It is found in the cytoplasm. The enzyme catalyses L-threonylcarbamoyladenylate + adenosine(37) in tRNA = N(6)-L-threonylcarbamoyladenosine(37) in tRNA + AMP + H(+). Required for the formation of a threonylcarbamoyl group on adenosine at position 37 (t(6)A37) in tRNAs that read codons beginning with adenine. Is involved in the transfer of the threonylcarbamoyl moiety of threonylcarbamoyl-AMP (TC-AMP) to the N6 group of A37, together with TsaE and TsaB. TsaD likely plays a direct catalytic role in this reaction. This chain is tRNA N6-adenosine threonylcarbamoyltransferase, found in Bifidobacterium longum (strain NCC 2705).